The sequence spans 37 residues: Toxin Bcg III 28.78 (37 aa).

Cysteine 6 and cysteine 31 are disulfide-bonded.

It is found in the secreted. It localises to the nematocyst. The protein is Toxin Bcg III 28.78 of Bunodosoma cangicum (Sea anemone).